A 485-amino-acid chain; its full sequence is Glutamyl-tRNA(Gln) amidotransferase subunit A (485 aa).

Residues K78 and S153 each act as charge relay system in the active site. S177 acts as the Acyl-ester intermediate in catalysis.

Belongs to the amidase family. GatA subfamily. As to quaternary structure, heterotrimer of A, B and C subunits.

It carries out the reaction L-glutamyl-tRNA(Gln) + L-glutamine + ATP + H2O = L-glutaminyl-tRNA(Gln) + L-glutamate + ADP + phosphate + H(+). Functionally, allows the formation of correctly charged Gln-tRNA(Gln) through the transamidation of misacylated Glu-tRNA(Gln) in organisms which lack glutaminyl-tRNA synthetase. The reaction takes place in the presence of glutamine and ATP through an activated gamma-phospho-Glu-tRNA(Gln). This is Glutamyl-tRNA(Gln) amidotransferase subunit A from Trichlorobacter lovleyi (strain ATCC BAA-1151 / DSM 17278 / SZ) (Geobacter lovleyi).